A 209-amino-acid polypeptide reads, in one-letter code: CAAX box protein 1 (209 aa).

The segment at 182–209 (TAGRPPRDLSPSARPISSPPPETSCVLA) is disordered. Cys206 is subject to Cysteine methyl ester. Residue Cys206 is the site of S-farnesyl cysteine attachment. Residues 207 to 209 (VLA) constitute a propeptide, removed in mature form.

Ubiquitous.

Its subcellular location is the cell membrane. This chain is CAAX box protein 1, found in Homo sapiens (Human).